Here is a 221-residue protein sequence, read N- to C-terminus: 7-cyano-7-deazaguanine synthase (221 aa).

9 to 19 is a binding site for ATP; it reads YSGGMDSFTVL. Zn(2+) contacts are provided by cysteine 186, cysteine 194, cysteine 197, and cysteine 200.

It belongs to the QueC family. The cofactor is Zn(2+).

The catalysed reaction is 7-carboxy-7-deazaguanine + NH4(+) + ATP = 7-cyano-7-deazaguanine + ADP + phosphate + H2O + H(+). It functions in the pathway purine metabolism; 7-cyano-7-deazaguanine biosynthesis. Its function is as follows. Catalyzes the ATP-dependent conversion of 7-carboxy-7-deazaguanine (CDG) to 7-cyano-7-deazaguanine (preQ(0)). This Psychromonas ingrahamii (strain DSM 17664 / CCUG 51855 / 37) protein is 7-cyano-7-deazaguanine synthase.